The primary structure comprises 461 residues: Cysteine--tRNA ligase (461 aa).

C29 contacts Zn(2+). The short motif at 31–41 (MTVYDLCHLGH) is the 'HIGH' region element. Residues C213, H238, and E242 each coordinate Zn(2+). The short motif at 270–274 (KMSKS) is the 'KMSKS' region element. ATP is bound at residue K273.

The protein belongs to the class-I aminoacyl-tRNA synthetase family. In terms of assembly, monomer. Zn(2+) serves as cofactor.

The protein resides in the cytoplasm. It catalyses the reaction tRNA(Cys) + L-cysteine + ATP = L-cysteinyl-tRNA(Cys) + AMP + diphosphate. The protein is Cysteine--tRNA ligase of Delftia acidovorans (strain DSM 14801 / SPH-1).